Reading from the N-terminus, the 176-residue chain is MASFGVRGMGQPLGIRICCCRVCTCINFGFVLSRIGLLKLMQLGLAMLCEGLLIRYGVPYADSIGQALTSFLATTGHCFTTTGILLLCYAFSDKSYSLIRQSLFETLFNGLASCMYFSSSSYMGFACVVWLHPQFLVRPGFWAYPAMTACYYMGYAAGILHALDAYLAFRHFRGAR.

The next 4 membrane-spanning stretches (helical) occupy residues 13–35, 71–91, 111–131, and 140–160; these read LGIR…LSRI, FLAT…CYAF, LASC…VVWL, and GFWA…AGIL. Residues 30–173 enclose the MARVEL domain; sequence FVLSRIGLLK…DAYLAFRHFR (144 aa).

The protein localises to the membrane. Its function is as follows. Essential for myoblast fusion in developing embryos and pupae, and consequently is essential for muscle formation in adults. Required for progression past the pre-fusion complex stage of myoblast fusion. The sequence is that of Protein singles bar from Drosophila melanogaster (Fruit fly).